A 183-amino-acid polypeptide reads, in one-letter code: uncharacterized protein (183 aa).

Residues 1–36 (MAKRGNKKKQEAPLSLGKHTVGGRVGKPTNAKTGSA) are disordered. The RRM domain maps to 100-174 (TNVVIENLAP…FKLSCYIKKN (75 aa)).

Its subcellular location is the nucleus. The protein resides in the nucleolus. This is an uncharacterized protein from Schizosaccharomyces pombe (strain 972 / ATCC 24843) (Fission yeast).